Consider the following 862-residue polypeptide: Protein translocase subunit SecA (862 aa).

Residues glutamine 86, 104 to 108 (GEGKT), and aspartate 499 contribute to the ATP site. The Zn(2+) site is built by cysteine 848, cysteine 850, cysteine 859, and histidine 860.

Belongs to the SecA family. In terms of assembly, monomer and homodimer. Part of the essential Sec protein translocation apparatus which comprises SecA, SecYEG and auxiliary proteins SecDF-YajC and YidC. The cofactor is Zn(2+).

Its subcellular location is the cell inner membrane. It localises to the cytoplasm. It carries out the reaction ATP + H2O + cellular proteinSide 1 = ADP + phosphate + cellular proteinSide 2.. Its function is as follows. Part of the Sec protein translocase complex. Interacts with the SecYEG preprotein conducting channel. Has a central role in coupling the hydrolysis of ATP to the transfer of proteins into and across the cell membrane, serving both as a receptor for the preprotein-SecB complex and as an ATP-driven molecular motor driving the stepwise translocation of polypeptide chains across the membrane. The chain is Protein translocase subunit SecA from Ehrlichia chaffeensis (strain ATCC CRL-10679 / Arkansas).